The chain runs to 667 residues: UvrABC system protein C (667 aa).

Residues 43-122 (AEPGCYLMRD…IKNQQPHFNV (80 aa)) enclose the GIY-YIG domain. Positions 232 to 267 (QELKVLLEKQMERYSDRMDYESAANIRDQIKGLEQL) constitute a UVR domain.

This sequence belongs to the UvrC family. In terms of assembly, interacts with UvrB in an incision complex.

The protein localises to the cytoplasm. Functionally, the UvrABC repair system catalyzes the recognition and processing of DNA lesions. UvrC both incises the 5' and 3' sides of the lesion. The N-terminal half is responsible for the 3' incision and the C-terminal half is responsible for the 5' incision. The sequence is that of UvrABC system protein C from Prochlorococcus marinus (strain MIT 9313).